A 327-amino-acid chain; its full sequence is Phenylalanine--tRNA ligase alpha subunit (327 aa).

Glu252 lines the Mg(2+) pocket.

The protein belongs to the class-II aminoacyl-tRNA synthetase family. Phe-tRNA synthetase alpha subunit type 1 subfamily. As to quaternary structure, tetramer of two alpha and two beta subunits. Mg(2+) serves as cofactor.

It localises to the cytoplasm. The enzyme catalyses tRNA(Phe) + L-phenylalanine + ATP = L-phenylalanyl-tRNA(Phe) + AMP + diphosphate + H(+). The chain is Phenylalanine--tRNA ligase alpha subunit from Shewanella putrefaciens (strain CN-32 / ATCC BAA-453).